Consider the following 243-residue polypeptide: Probable septum site-determining protein MinC (243 aa).

Belongs to the MinC family. As to quaternary structure, interacts with MinD and FtsZ.

Cell division inhibitor that blocks the formation of polar Z ring septums. Rapidly oscillates between the poles of the cell to destabilize FtsZ filaments that have formed before they mature into polar Z rings. Prevents FtsZ polymerization. The protein is Probable septum site-determining protein MinC of Wigglesworthia glossinidia brevipalpis.